Consider the following 206-residue polypeptide: MNILQIDSSVLGGHSVSRNLTASVVADLVAANPGAKVTVRDLDQDAPAHLSGHLLPVLGGPKDGLNAAQEAELQRTETWLAEFLAADVLVVGVPQYNFSIPSQLKSWIDRIAQAGRTFKYTENGPVGLAGGKRVIVVSSRGGVRQDANELDLHEKTVDVVFRFLGITDITYVRAHGLAMGPDAREAGLSSARTEIAALNDGGRLAA.

Residues Ser-9, 15-17 (SVS), and 139-142 (SRGG) each bind FMN.

It belongs to the azoreductase type 1 family. Homodimer. FMN is required as a cofactor.

The catalysed reaction is 2 a quinone + NADH + H(+) = 2 a 1,4-benzosemiquinone + NAD(+). The enzyme catalyses N,N-dimethyl-1,4-phenylenediamine + anthranilate + 2 NAD(+) = 2-(4-dimethylaminophenyl)diazenylbenzoate + 2 NADH + 2 H(+). In terms of biological role, quinone reductase that provides resistance to thiol-specific stress caused by electrophilic quinones. Its function is as follows. Also exhibits azoreductase activity. Catalyzes the reductive cleavage of the azo bond in aromatic azo compounds to the corresponding amines. In Cupriavidus pinatubonensis (strain JMP 134 / LMG 1197) (Cupriavidus necator (strain JMP 134)), this protein is FMN-dependent NADH:quinone oxidoreductase 1.